Here is a 1483-residue protein sequence, read N- to C-terminus: Rho GTPase-activating protein 23 (1483 aa).

Residues 15 to 34 (PEPRPPQLPLGPRDGCSSGR) form a disordered region. Positions 71–155 (HCILKEEENG…TLELSIMPKD (85 aa)) constitute a PDZ domain. Disordered regions lie at residues 212–276 (ISAL…PGSR) and 300–345 (AGER…GQEG). A compositionally biased stretch (basic and acidic residues) spans 316-325 (SQDRLEDVTT). The span at 331–342 (CSTSQDALSQLG) shows a compositional bias: polar residues. Phosphoserine is present on residues serine 361 and serine 372. The disordered stretch occupies residues 385–407 (PSARTSACPSRDLTQAPPPSGLQ). Position 421 is a phosphoserine (serine 421). Disordered regions lie at residues 448 to 485 (SLAQ…DHRD) and 508 to 527 (NLGF…RLGR). 4 positions are modified to phosphoserine: serine 515, serine 579, serine 607, and serine 619. Threonine 652 is subject to Phosphothreonine. A phosphoserine mark is found at serine 655, serine 658, and serine 673. Positions 684–804 (DIRREGWLYY…WIRAIRENSR (121 aa)) constitute a PH domain. The tract at residues 827–848 (KVSHSSGPKADSSPKGSRGLGG) is disordered. Lysine 850 is covalently cross-linked (Glycyl lysine isopeptide (Lys-Gly) (interchain with G-Cter in SUMO2)). Disordered regions lie at residues 860 to 879 (RGLR…VAAP), 1093 to 1150 (FSDD…SWVP), 1171 to 1361 (KRKK…GSRP), and 1419 to 1469 (ELGG…LQGL). One can recognise a Rho-GAP domain in the interval 901–1093 (IRLEECQPAT…TLIQHSDWFF (193 aa)). Residues 1099-1110 (KGERTPVDDKEP) are compositionally biased toward basic and acidic residues. 2 stretches are compositionally biased toward polar residues: residues 1133-1144 (GSDSTTCSSAKS) and 1236-1248 (SIVS…STMD). Residues 1338-1351 (GSASSSSQESLRPP) are compositionally biased toward low complexity. Positions 1440–1457 (SGLSSLESTKARASSAAS) are enriched in polar residues.

Functionally, GTPase activator for the Rho-type GTPases by converting them to an inactive GDP-bound state. The protein is Rho GTPase-activating protein 23 (Arhgap23) of Mus musculus (Mouse).